A 129-amino-acid chain; its full sequence is Small ribosomal subunit protein bS18c (129 aa).

Positions 1 to 20 (MGTSNTQKPQKQVPKRKKYK) are disordered.

The protein belongs to the bacterial ribosomal protein bS18 family. As to quaternary structure, part of the 30S ribosomal subunit.

Its subcellular location is the plastid. The protein resides in the chloroplast. In Stigeoclonium helveticum (Green alga), this protein is Small ribosomal subunit protein bS18c.